The sequence spans 343 residues: Cytoplasmic tRNA 2-thiolation protein 1 (343 aa).

This sequence belongs to the TtcA family. CTU1/NCS6/ATPBD3 subfamily.

Its subcellular location is the cytoplasm. The protein operates within tRNA modification; 5-methoxycarbonylmethyl-2-thiouridine-tRNA biosynthesis. In terms of biological role, plays a central role in 2-thiolation of mcm(5)S(2)U at tRNA wobble positions of tRNA(Lys), tRNA(Glu) and tRNA(Gln). Directly binds tRNAs and probably acts by catalyzing adenylation of tRNAs, an intermediate required for 2-thiolation. It is unclear whether it acts as a sulfurtransferase that transfers sulfur from thiocarboxylated URM1 onto the uridine of tRNAs at wobble position. The polypeptide is Cytoplasmic tRNA 2-thiolation protein 1 (Drosophila grimshawi (Hawaiian fruit fly)).